A 464-amino-acid chain; its full sequence is Protein FAM90A26 (464 aa).

4 disordered regions span residues 1–42, 70–293, 312–390, and 410–442; these read MMAC…DPRL, PPTL…AKRP, PFQI…DGAQ, and AAPS…VRVP. 2 stretches are compositionally biased toward basic and acidic residues: residues 74 to 83 and 97 to 114; these read GKKEGKENLK and NKDK…DPQR. Residues 178-197 show a composition bias toward low complexity; it reads SALASLSPLRKASLSSSSSL.

The protein belongs to the FAM90 family.

This is Protein FAM90A26 from Homo sapiens (Human).